A 180-amino-acid polypeptide reads, in one-letter code: MKEKAVVLDDQMIRRALTRISHEIVEHNKGVDQCVLVGIKTRGIFLAKRLAEKIGQIEGKEIEVGELDITLYRDDLTLQSKDKEPLVKGSDIPVDITKKKVILVDDVLYTGRTVRAAMDALMDLGRPSQIQLAVLVDRGHRELPIRADYVGKNIPTSSEERIEVDLQETDQKDRVSIYEK.

The PRPP-binding signature appears at 101–113; the sequence is VILVDDVLYTGRT.

This sequence belongs to the purine/pyrimidine phosphoribosyltransferase family. PyrR subfamily. As to quaternary structure, homodimer and homohexamer; in equilibrium.

It carries out the reaction UMP + diphosphate = 5-phospho-alpha-D-ribose 1-diphosphate + uracil. Regulates transcriptional attenuation of the pyrimidine nucleotide (pyr) operon by binding in a uridine-dependent manner to specific sites on pyr mRNA. This disrupts an antiterminator hairpin in the RNA and favors formation of a downstream transcription terminator, leading to a reduced expression of downstream genes. Functionally, also displays a weak uracil phosphoribosyltransferase activity which is not physiologically significant. This is Bifunctional protein PyrR from Bacillus cytotoxicus (strain DSM 22905 / CIP 110041 / 391-98 / NVH 391-98).